The primary structure comprises 699 residues: Epithelial sodium channel subunit alpha (699 aa).

The disordered stretch occupies residues 1–71; sequence MLDHTRAPEL…EPRQPTEEEE (71 aa). Topologically, residues 1 to 110 are cytoplasmic; it reads MLDHTRAPEL…CSKHNRMKTA (110 aa). Residues 111–131 form a helical membrane-spanning segment; sequence FWAVLWLCTFGMMYWQFALLF. The Extracellular segment spans residues 132–589; that stretch reads EEYFSYPVSL…SQWSLWFGSS (458 aa). Intrachain disulfides connect C158/C332, C256/C263, C309/C316, C421/C506, C443/C483, C443/C502, C447/C498, C456/C483, C456/C506, and C458/C472. Residues 200–270 are gating release of inhibition by proteolysis (GRIP); protease-sensitive region that is responsible for the proteolytic activation of the channel; that stretch reads RRRSTRDLRG…SDCFYQTYSS (71 aa). The interval 211 to 244 is disordered; the sequence is LPHPLQRLRTPPPPNPARSARSASSSVRDNNPQV. Low complexity predominate over residues 227-238; the sequence is ARSARSASSSVR. The helical transmembrane segment at 590–610 threads the bilayer; the sequence is VLSVVEMAELIFDLLVITLIM. Over 611 to 699 the chain is Cytoplasmic; the sequence is LLHRFRSRYW…SSACAPAMAL (89 aa). The tract at residues 637–699 is disordered; it reads ASSFPSRFCP…SSACAPAMAL (63 aa). A compositionally biased stretch (low complexity) spans 656–667; sequence PQQGTTPPLALT. The short motif at 669–673 is the PY motif; recruits WW domain-containing proteins and is thereby required for ubiquitination and inhibition of the channel by NEDD4 and NEDD4L element; it reads PPPAY.

This sequence belongs to the amiloride-sensitive sodium channel (TC 1.A.6) family. SCNN1A subfamily. As to quaternary structure, heterotrimer; containing an alpha/SCNN1A, a beta/SCNN1B and a gamma/SCNN1G subunit. Interacts with WWP1 (via WW domains). Interacts with WWP2 (via WW domains); inhibits the channel. Interacts with BPIFA1; the interaction is indirect via SCNN1B and inhibits the proteolytic processing of SCNN1A and SCNN1G and the activation of ENaC. Interacts with the full-length immature form of PCSK9 (pro-PCSK9). In terms of processing, ubiquitinated. Can be ubiquitinated at multiple sites and undergo monoubiquitination and polyubiquitination. Ubiquitination by NEDD4 or NEDD4L inhibits the ENaC channel through endocytosis, intracellular retention and degradation of its individual subunits. ENaC is activated through the proteolytic maturation of its subunits. Furin cleaves the SCNN1A subunit, which results in a stepwise increase in the open probability of the channel due to the release of an inhibitory tract. BPIFA1, which is recruited by the SCNN1B subunit, prevents the proteolytic activation of ENaC. Post-translationally, N-glycosylated. In terms of tissue distribution, expressed in kidney (at protein level). Expressed in lung (at protein level). Expressed in the epididymis (at protein level). In the caput and corpus regions of the epididymis, expressed uniformly on the luminal and basal surfaces of the ducts and in the sperm in the duct lumen. Also expressed in distal colon and, at low levels, in liver.

It is found in the apical cell membrane. The protein resides in the cell projection. It localises to the cilium. The protein localises to the cytoplasmic granule. Its subcellular location is the cytoplasm. It is found in the cytoplasmic vesicle. The protein resides in the secretory vesicle. It localises to the acrosome. The protein localises to the flagellum. It carries out the reaction Na(+)(in) = Na(+)(out). With respect to regulation, originally identified and characterized by its inhibition by the diuretic drug amiloride. In terms of biological role, this is one of the three pore-forming subunits of the heterotrimeric epithelial sodium channel (ENaC), a critical regulator of sodium balance and fluid homeostasis. ENaC operates in epithelial tissues, where it mediates the electrodiffusion of sodium ions from extracellular fluid through the apical membrane of cells, with water following osmotically. It plays a key role in maintaining sodium homeostasis through electrogenic sodium reabsorption in the kidneys. Additionally, ENaC is essential for airway surface liquid homeostasis, which is crucial for proper mucus clearance. The sequence is that of Epithelial sodium channel subunit alpha from Mus musculus (Mouse).